The primary structure comprises 200 residues: Small ribosomal subunit protein eS8A (200 aa).

Residues 1 to 31 (MGISRDSRHKRSATGAKRAQFRKKRKFELGR) are disordered. Phosphothreonine is present on threonine 62. Phosphoserine is present on residues serine 66, serine 69, serine 73, and serine 86. Threonine 107 is modified (phosphothreonine). A phosphoserine mark is found at serine 154, serine 155, serine 158, and serine 161.

It belongs to the eukaryotic ribosomal protein eS8 family. As to quaternary structure, component of the small ribosomal subunit (SSU). Mature yeast ribosomes consist of a small (40S) and a large (60S) subunit. The 40S small subunit contains 1 molecule of ribosomal RNA (18S rRNA) and 33 different proteins (encoded by 57 genes). The large 60S subunit contains 3 rRNA molecules (25S, 5.8S and 5S rRNA) and 46 different proteins (encoded by 81 genes).

It localises to the cytoplasm. Component of the ribosome, a large ribonucleoprotein complex responsible for the synthesis of proteins in the cell. The small ribosomal subunit (SSU) binds messenger RNAs (mRNAs) and translates the encoded message by selecting cognate aminoacyl-transfer RNA (tRNA) molecules. The large subunit (LSU) contains the ribosomal catalytic site termed the peptidyl transferase center (PTC), which catalyzes the formation of peptide bonds, thereby polymerizing the amino acids delivered by tRNAs into a polypeptide chain. The nascent polypeptides leave the ribosome through a tunnel in the LSU and interact with protein factors that function in enzymatic processing, targeting, and the membrane insertion of nascent chains at the exit of the ribosomal tunnel. This is Small ribosomal subunit protein eS8A from Saccharomyces cerevisiae (strain ATCC 204508 / S288c) (Baker's yeast).